We begin with the raw amino-acid sequence, 461 residues long: Serine--tRNA ligase (461 aa).

Residues 112–134 (EVPFGRDENDNREHHTFGEKPRF) form a disordered region. Basic and acidic residues predominate over residues 114–134 (PFGRDENDNREHHTFGEKPRF). Residue 252 to 254 (TAE) coordinates L-serine. 283–285 (RAE) is a binding site for ATP. Residue E306 participates in L-serine binding. 370-373 (EISS) serves as a coordination point for ATP. L-serine is bound at residue S406.

It belongs to the class-II aminoacyl-tRNA synthetase family. Type-1 seryl-tRNA synthetase subfamily. As to quaternary structure, homodimer. The tRNA molecule binds across the dimer.

The protein localises to the cytoplasm. It carries out the reaction tRNA(Ser) + L-serine + ATP = L-seryl-tRNA(Ser) + AMP + diphosphate + H(+). It catalyses the reaction tRNA(Sec) + L-serine + ATP = L-seryl-tRNA(Sec) + AMP + diphosphate + H(+). It participates in aminoacyl-tRNA biosynthesis; selenocysteinyl-tRNA(Sec) biosynthesis; L-seryl-tRNA(Sec) from L-serine and tRNA(Sec): step 1/1. Its function is as follows. Catalyzes the attachment of serine to tRNA(Ser). Is also able to aminoacylate tRNA(Sec) with serine, to form the misacylated tRNA L-seryl-tRNA(Sec), which will be further converted into selenocysteinyl-tRNA(Sec). This is Serine--tRNA ligase from Methylocella silvestris (strain DSM 15510 / CIP 108128 / LMG 27833 / NCIMB 13906 / BL2).